We begin with the raw amino-acid sequence, 108 residues long: Glutaredoxin-1 (108 aa).

Residues 3–106 form the Glutaredoxin domain; sequence EEFVQQRLTN…DILSSIGVLR (104 aa). Residues Cys-23 and Cys-26 are joined by a disulfide bond.

Belongs to the glutaredoxin family.

Its subcellular location is the virion. Functionally, displays thioltransferase and dehydroascorbate reductase activities. This chain is Glutaredoxin-1 (OPG075), found in Variola virus (isolate Human/India/Ind3/1967) (VARV).